Reading from the N-terminus, the 250-residue chain is 1-(5-phosphoribosyl)-5-[(5-phosphoribosylamino)methylideneamino] imidazole-4-carboxamide isomerase (250 aa).

The active-site Proton acceptor is the Asp-10. Asp-131 serves as the catalytic Proton donor.

The protein belongs to the HisA/HisF family.

The protein resides in the cytoplasm. The enzyme catalyses 1-(5-phospho-beta-D-ribosyl)-5-[(5-phospho-beta-D-ribosylamino)methylideneamino]imidazole-4-carboxamide = 5-[(5-phospho-1-deoxy-D-ribulos-1-ylimino)methylamino]-1-(5-phospho-beta-D-ribosyl)imidazole-4-carboxamide. Its pathway is amino-acid biosynthesis; L-histidine biosynthesis; L-histidine from 5-phospho-alpha-D-ribose 1-diphosphate: step 4/9. The sequence is that of 1-(5-phosphoribosyl)-5-[(5-phosphoribosylamino)methylideneamino] imidazole-4-carboxamide isomerase from Desulfitobacterium hafniense (strain DSM 10664 / DCB-2).